Here is a 490-residue protein sequence, read N- to C-terminus: Protein U94 (490 aa).

The region spanning 1-210 is the PV NS1-Nuc domain; sequence MFSIINPSDD…SHFNKKPNVK (210 aa).

The protein localises to the host nucleus. This is Protein U94 (U94) from Human herpesvirus 6A (strain Uganda-1102) (HHV-6 variant A).